Here is a 458-residue protein sequence, read N- to C-terminus: MAGSSRRAGGRRLQLPLLCLLLQGATAILFAVFVRYNHETDAALWHWGNHSNPDNEFYFRYPSFQDVHTMIFVGFGFLMAFLQRYGFSSVGFTFLLAAFALQWSTLVQGFLHTFHGGHIHIGVESMINADFCAGAVLISFGAILGKTGPAQLLLMALLEVVLFGLNEFVLLSLLGVKDAGGSMTIHTFGAYFGLVLSRVLYRPQLEKSKHRQSSVYHSDLFAMIGTIFLWIFWPSFNSAPTPLGDGQHRTALNTYYSLTASTLSTFALSALVGRDGRLDMVHVQNAALAGGVVVGTSAEMMLTPFGALAAGFLAGTVSTLGFKFFTPILESKFKIQDTCGVHNLHGMPGVLGALLGVLVAGLATHDSYGEGLESVFPLIAEGQRSSTSQALHQLFGLFVTLIFASVGGGLGGLLLRLPFLDSPPDSQCYEDQIYWEVPEEHADLAQGSLRPEEPDTQA.

Over 1–13 (MAGSSRRAGGRRL) the chain is Cytoplasmic. A helical transmembrane segment spans residues 14–34 (QLPLLCLLLQGATAILFAVFV). Residues 35–61 (RYNHETDAALWHWGNHSNPDNEFYFRY) lie on the Extracellular side of the membrane. An N-linked (GlcNAc...) asparagine glycan is attached at N49. The helical transmembrane segment at 62–82 (PSFQDVHTMIFVGFGFLMAFL) threads the bilayer. The Cytoplasmic portion of the chain corresponds to 83 to 86 (QRYG). Residues 87-107 (FSSVGFTFLLAAFALQWSTLV) form a helical membrane-spanning segment. Over 108-124 (QGFLHTFHGGHIHIGVE) the chain is Extracellular. Residues 125 to 145 (SMINADFCAGAVLISFGAILG) traverse the membrane as a helical segment. Over 146–149 (KTGP) the chain is Cytoplasmic. A helical transmembrane segment spans residues 150 to 170 (AQLLLMALLEVVLFGLNEFVL). The Extracellular portion of the chain corresponds to 171–178 (LSLLGVKD). A helical transmembrane segment spans residues 179 to 201 (AGGSMTIHTFGAYFGLVLSRVLY). Topologically, residues 202-219 (RPQLEKSKHRQSSVYHSD) are cytoplasmic. Residues 220–240 (LFAMIGTIFLWIFWPSFNSAP) form a helical membrane-spanning segment. Over 241–251 (TPLGDGQHRTA) the chain is Extracellular. The helical transmembrane segment at 252–272 (LNTYYSLTASTLSTFALSALV) threads the bilayer. At 273-282 (GRDGRLDMVH) the chain is on the cytoplasmic side. The chain crosses the membrane as a helical span at residues 283–303 (VQNAALAGGVVVGTSAEMMLT). P304 is a topological domain (extracellular). The helical transmembrane segment at 305–325 (FGALAAGFLAGTVSTLGFKFF) threads the bilayer. Residues 326–346 (TPILESKFKIQDTCGVHNLHG) are Cytoplasmic-facing. The chain crosses the membrane as a helical span at residues 347-367 (MPGVLGALLGVLVAGLATHDS). Topologically, residues 368–393 (YGEGLESVFPLIAEGQRSSTSQALHQ) are extracellular. A helical transmembrane segment spans residues 394-414 (LFGLFVTLIFASVGGGLGGLL). Topologically, residues 415–458 (LRLPFLDSPPDSQCYEDQIYWEVPEEHADLAQGSLRPEEPDTQA) are cytoplasmic. An interaction with ANK3 region spans residues 416 to 424 (RLPFLDSPP). The Basolateral sorting signal signature appears at 429–432 (YEDQ).

It belongs to the ammonium transporter (TC 2.A.49) family. Rh subfamily. Interacts (via C-terminus) with ANK2 and ANK3; required for targeting to the basolateral membrane. Post-translationally, N-glycosylated.

The protein resides in the cell membrane. The protein localises to the basolateral cell membrane. It carries out the reaction NH4(+)(in) = NH4(+)(out). The catalysed reaction is methylamine(out) = methylamine(in). It catalyses the reaction CO2(out) = CO2(in). Functionally, ammonium transporter involved in the maintenance of acid-base homeostasis. Transports ammonium and its related derivative methylammonium across the basolateral plasma membrane of epithelial cells likely contributing to renal transepithelial ammonia transport and ammonia metabolism. May transport either NH4(+) or NH3 ammonia species predominantly mediating an electrogenic NH4(+) transport. May act as a CO2 channel providing for renal acid secretion. The sequence is that of Ammonium transporter Rh type B (RHBG) from Sus scrofa (Pig).